Here is a 129-residue protein sequence, read N- to C-terminus: Small ribosomal subunit protein uS12 (129 aa).

Disordered regions lie at residues 1–25 (MPTY…PALE) and 110–129 (RKQG…VTKK). The segment covering 10-20 (FGRKSKTRKTK) has biased composition (basic residues).

This sequence belongs to the universal ribosomal protein uS12 family. Part of the 30S ribosomal subunit. Contacts proteins S8 and S17. May interact with IF1 in the 30S initiation complex.

In terms of biological role, with S4 and S5 plays an important role in translational accuracy. Its function is as follows. Interacts with and stabilizes bases of the 16S rRNA that are involved in tRNA selection in the A site and with the mRNA backbone. Located at the interface of the 30S and 50S subunits, it traverses the body of the 30S subunit contacting proteins on the other side and probably holding the rRNA structure together. The combined cluster of proteins S8, S12 and S17 appears to hold together the shoulder and platform of the 30S subunit. The protein is Small ribosomal subunit protein uS12 of Rickettsia conorii (strain ATCC VR-613 / Malish 7).